Here is a 773-residue protein sequence, read N- to C-terminus: Mitochondrial inner membrane m-AAA protease component yta12 (773 aa).

Positions 83-119 (FSVTSKRSQNGSSGSNSDANGRKNGQKNDDSKKKGLN) are disordered. Positions 87 to 101 (SKRSQNGSSGSNSDA) are enriched in low complexity. The next 2 membrane-spanning stretches (helical) occupy residues 126-146 (VFEIALNGNTILGGILVAYIL) and 239-259 (VLATLLSFAPTLLIIGSVIYL). ATP is bound by residues Val-298, Ala-299, Thr-340, Gly-341, Lys-342, Thr-343, Leu-344, and His-479. His-561 serves as a coordination point for Zn(2+). The active site involves Glu-562. The Zn(2+) site is built by His-565 and Asp-638. The interval 752–773 (EYKNDHDPRNPPIPPSPQQPSA) is disordered. Positions 761 to 773 (NPPIPPSPQQPSA) are enriched in pro residues.

In the N-terminal section; belongs to the AAA ATPase family. The protein in the C-terminal section; belongs to the peptidase M41 family. Component of the m-AAA protease complex. Requires Zn(2+) as cofactor.

The protein resides in the mitochondrion membrane. It catalyses the reaction ATP + H2O = ADP + phosphate + H(+). Its function is as follows. Catalytic component of the m-AAA protease, a protease that plays a key role in proteostasis of inner mitochondrial membrane proteins. Possesses both ATPase and protease activities: the ATPase activity is required to unfold substrates, threading them into the internal proteolytic cavity for hydrolysis into small peptide fragments. The complex is necessary for the assembly of mitochondrial respiratory chain and ATPase complexes. The m-AAA protease carries out protein quality control in the inner membrane of the mitochondria by mediating degradation of mistranslated or misfolded polypeptides. It also mediates protein maturation of the mitochondrial ribosomal subunit mrpl32/bL32m by catalyzing the cleavage of the presequence of mrpl32/bL32m prior to assembly into the mitochondrial ribosome. Also acts as a membrane protein dislocase: required to dislocate moderately hydrophobic transmembrane segments from the membrane. In Schizosaccharomyces pombe (strain 972 / ATCC 24843) (Fission yeast), this protein is Mitochondrial inner membrane m-AAA protease component yta12 (yta12).